We begin with the raw amino-acid sequence, 240 residues long: Prolactin-8A6 (240 aa).

The signal sequence occupies residues 1–30; sequence MALLLSQPHFSGPLLLLVVSNLLLWEKAAS. Disulfide bonds link Cys-34-Cys-41, Cys-101-Cys-216, and Cys-233-Cys-240. A glycan (N-linked (GlcNAc...) asparagine) is linked at Asn-212.

Belongs to the somatotropin/prolactin family. In terms of tissue distribution, expressed specifically in the spongiotrophoblast and trophoblast giant cells from the junctional zone of the chorioallantoic placenta.

The protein localises to the secreted. The chain is Prolactin-8A6 (Prl8a6) from Mus musculus (Mouse).